Here is a 198-residue protein sequence, read N- to C-terminus: MARCKS-related protein (198 aa).

The segment at 1–198 (MGSQSSKAPR…DPAPASEQNE (198 aa)) is disordered. G2 carries N-myristoyl glycine lipidation. Phosphothreonine is present on T14. 4 positions are modified to phosphoserine: S22, S36, S41, and S48. Low complexity predominate over residues 53-62 (GTEEAAGATG). S71 carries the post-translational modification Phosphoserine. The span at 76-85 (AKGEVPPKET) shows a compositional bias: basic and acidic residues. The residue at position 85 (T85) is a Phosphothreonine. Basic residues predominate over residues 86–98 (PKKKKKFSFKKPF). The effector domain involved in lipid-binding and calmodulin-binding stretch occupies residues 87–110 (KKKKKFSFKKPFKLSGLSFKRNRK). A phosphoserine; by PKC mark is found at S93, S101, and S104. Position 119 is a phosphoserine (S119). The residue at position 120 (S120) is a Phosphoserine; by MAPK8. S132 is modified (phosphoserine). At T148 the chain carries Phosphothreonine; by MAPK8. S151 and S162 each carry phosphoserine. Residues 156-167 (AKGAEASAAAKG) show a composition bias toward low complexity. A Phosphothreonine modification is found at T170. T182 bears the Phosphothreonine; by MAPK8 mark.

Belongs to the MARCKS family. Binds to filamentous actin (F-actin), but not to monomeric G-actin, independently of its phosphorylation status. Interacts with calmodulin. In terms of processing, phosphorylated. Phosphorylation at Ser-120 and Thr-182 is non-redundantly catalyzed by MAPK8 in vivo. Phosphorylation at Thr-148 is preferentially catalyzed by MAPK8 in vivo, but this modification can also be catalyzed by other kinases in the absence of MAPK8. May be phosphorylated by protein kinase C, which disrupts the interaction with calmodulin.

The protein localises to the cytoplasm. It is found in the cytoskeleton. Its subcellular location is the cell membrane. Functionally, controls cell movement by regulating actin cytoskeleton homeostasis and filopodium and lamellipodium formation. When unphosphorylated, induces cell migration. When phosphorylated by MAPK8, induces actin bundles formation and stabilization, thereby reducing actin plasticity, hence restricting cell movement, including neuronal migration. May be involved in coupling the protein kinase C and calmodulin signal transduction systems. In Bos taurus (Bovine), this protein is MARCKS-related protein (MARCKSL1).